We begin with the raw amino-acid sequence, 175 residues long: Shikimate kinase (175 aa).

An ATP-binding site is contributed by 17-22 (GAGKST). Ser-21 contacts Mg(2+). Residues Asp-39, Arg-63, and Gly-85 each coordinate substrate. An ATP-binding site is contributed by Arg-123. Residue Arg-142 coordinates substrate. Residue Gln-159 participates in ATP binding.

This sequence belongs to the shikimate kinase family. As to quaternary structure, monomer. Requires Mg(2+) as cofactor.

Its subcellular location is the cytoplasm. It carries out the reaction shikimate + ATP = 3-phosphoshikimate + ADP + H(+). The protein operates within metabolic intermediate biosynthesis; chorismate biosynthesis; chorismate from D-erythrose 4-phosphate and phosphoenolpyruvate: step 5/7. In terms of biological role, catalyzes the specific phosphorylation of the 3-hydroxyl group of shikimic acid using ATP as a cosubstrate. In Photobacterium profundum (strain SS9), this protein is Shikimate kinase.